Consider the following 819-residue polypeptide: MPTRVCCCCSALRPRYKRLVDNIFPEDPKDGLVKADMEKLTFYAVSAPEKLDRIGAYLAERLSRDVVRHRSGYVLIAMEALDQLLMACHSQSIKPFVESFLHMVAKLLESGEPKLQVLGTNSFVKFANIEEDTPSYHRRYDFFVSRFSAMCHSCHSDPEIRTEIRIAGIRGIQGVVRKTVNDELRATIWEPQHMDKIVPSLLFNMQKIEEVDSRLGPPSSPSAADKEENPAVLAESCFRELLGRATFGNMNNAVRPVFAHLDHHKLWDPNEFAVHCFKIIMYSIQAQYSHHVIQEILGHLDARRKDSPRVRAGIIQVLLEAVAIAAKGSIGPTVLEVFNTLLKHLRLSVELEANDSQKGSVGSVTVSSKDNDEKIVQNAVIQTIGFFGSNLPDYQRSEIMMFIMGKVPVFGTSTHTLDISQLGDLGTRRIQIMLLRSLLMVTSGYKAKTIVTALPGSFLDPLLSPSLMEDYELRQLVLEVMHNLMDRHDNRAKLRGIRIIPDVADLKIKREKICRQDTSFMKKNGQQLYRHIYLGCKEEDNVQKNYELLYTSLALITIELANEEVVIDLIRLAIALQDSAIINEDNLSMFHRCGIMALVAAYLNFVSQMIAVPAFCQHVSKVIETRTMEAPYFLPEHIFRDKCMLPKSLEKHDKNLYFLTNKIAESLGGSGYSVERLTVPYVPQVTDEDRLSRRKSIVDTVSIQVDILSNSVPSDDVVSNTEEITFEALKKAIDTNGMEEQEKEKRRLVIEKFQKAPFEEIAAQCESKANLLHDRLAQILELTIRPPPSPSGTLTVTSGHTQYQSVPVYEMKFPDLCVY.

Residues serine 360, serine 363, serine 420, and serine 692 each carry the phosphoserine modification.

This sequence belongs to the EFR3 family. In terms of assembly, component of a phosphatidylinositol 4-kinase (PI4K) complex, composed of PI4KA, EFR3 (EFR3A or EFR3B), TTC7 (TTC7A or TTC7B) and HYCC (HYCC1 or HYCC2). Palmitoylated at its N-terminus, anchoring the protein to the plasma membrane. As to expression, widely expressed. Expressed in neurons of the superior olivary complex of the auditory brainstem. Also expressed at lower levels in the cochlear nucleus, the lateral leminiscal nuclei and the inferior collicus.

Its subcellular location is the cell membrane. It is found in the cytoplasm. It localises to the cytosol. In terms of biological role, component of a complex required to localize phosphatidylinositol 4-kinase (PI4K) to the plasma membrane. The complex acts as a regulator of phosphatidylinositol 4-phosphate (PtdIns(4)P) synthesis. In the complex, EFR3A probably acts as the membrane-anchoring component. Also involved in responsiveness to G-protein-coupled receptors; it is however unclear whether this role is direct or indirect. This is Protein EFR3 homolog A from Mus musculus (Mouse).